The primary structure comprises 85 residues: Type 3 secretion system needle filament protein (85 aa).

A coiled-coil region spans residues 13 to 41; it reads LDTVANALKEQANAANKDVNDAIKALQGT.

As to quaternary structure, the core secretion machinery of the T3SS is composed of approximately 20 different proteins, including cytoplasmic components, a base, an export apparatus and a needle. This subunit polymerizes and forms the helical needle filament. Forms a stable heterotrimeric complex with PscE and PscG in the cytoplasm, blocking it in a monomeric state and preventing its polymerization.

The protein resides in the secreted. The protein localises to the cell surface. Component of the type III secretion system (T3SS), also called injectisome, which is used to inject bacterial effector proteins into eukaryotic host cells, facilitating the establishment and dissemination of infection. PscF/SctF forms the external needle filament that protrudes from the bacterial surface. This chain is Type 3 secretion system needle filament protein, found in Pseudomonas aeruginosa (strain ATCC 15692 / DSM 22644 / CIP 104116 / JCM 14847 / LMG 12228 / 1C / PRS 101 / PAO1).